The chain runs to 1119 residues: GATOR2 complex protein MIOS (1119 aa).

The WD 1 repeat unit spans residues 3–43 (QSSTRKRLIQWSPHNKSSFIVGSNDLRLYNFKFKDKNEKKN). The tract at residues 41 to 60 (KKNENNINNSNQYNQNNQQQ) is disordered. A compositionally biased stretch (low complexity) spans 45–60 (NNINNSNQYNQNNQQQ). WD repeat units lie at residues 127–169 (KTIS…ILTS), 183–227 (KHTR…STTL), 281–321 (TQSE…SSQS), 324–364 (AHQK…DPLI), and 368–409 (SNCK…EFSK). The disordered stretch occupies residues 413 to 455 (LESTTLSTGGGGSGSNTSNNLNKRSTSNNNNSQDPINTISKPT). A compositionally biased stretch (low complexity) spans 427–444 (SNTSNNLNKRSTSNNNNS). A WD 7 repeat occupies 459–499 (HSSDVVSSFSWHPTNECRMLTVSYSGVIDVVSLNENIPISW). Positions 601–669 (PSISTTTPGG…NNNNNNNNNN (69 aa)) are disordered. Residues 973–1016 (AKCGFCQNSFAFESISASSIVGRNASSKPNFKAKVPFCPHCKQS) form a C4-type zinc finger. The Zn(2+) site is built by cysteine 975, cysteine 978, cysteine 1010, cysteine 1013, cysteine 1023, cysteine 1085, cysteine 1088, histidine 1090, histidine 1093, histidine 1096, cysteine 1107, cysteine 1112, and cysteine 1116.

It belongs to the WD repeat mio family. In terms of assembly, probably part of the GATOR complex.

The protein resides in the lysosome membrane. In terms of biological role, as a component of the GATOR complex may function in the amino acid-sensing branch of the TORC1 signaling pathway. The chain is GATOR2 complex protein MIOS from Dictyostelium discoideum (Social amoeba).